A 409-amino-acid polypeptide reads, in one-letter code: Tryptophan synthase beta chain (409 aa).

Lys95 is subject to N6-(pyridoxal phosphate)lysine.

Belongs to the TrpB family. Tetramer of two alpha and two beta chains. It depends on pyridoxal 5'-phosphate as a cofactor.

The enzyme catalyses (1S,2R)-1-C-(indol-3-yl)glycerol 3-phosphate + L-serine = D-glyceraldehyde 3-phosphate + L-tryptophan + H2O. Its pathway is amino-acid biosynthesis; L-tryptophan biosynthesis; L-tryptophan from chorismate: step 5/5. In terms of biological role, the beta subunit is responsible for the synthesis of L-tryptophan from indole and L-serine. The polypeptide is Tryptophan synthase beta chain (Pseudomonas savastanoi pv. phaseolicola (Pseudomonas syringae pv. phaseolicola)).